A 185-amino-acid polypeptide reads, in one-letter code: Ribosome-recycling factor (185 aa).

This sequence belongs to the RRF family.

It localises to the cytoplasm. In terms of biological role, responsible for the release of ribosomes from messenger RNA at the termination of protein biosynthesis. May increase the efficiency of translation by recycling ribosomes from one round of translation to another. The sequence is that of Ribosome-recycling factor from Mycobacteroides abscessus (strain ATCC 19977 / DSM 44196 / CCUG 20993 / CIP 104536 / JCM 13569 / NCTC 13031 / TMC 1543 / L948) (Mycobacterium abscessus).